The chain runs to 188 residues: Probable nicotinate-nucleotide adenylyltransferase (188 aa).

This sequence belongs to the NadD family.

The enzyme catalyses nicotinate beta-D-ribonucleotide + ATP + H(+) = deamido-NAD(+) + diphosphate. It functions in the pathway cofactor biosynthesis; NAD(+) biosynthesis; deamido-NAD(+) from nicotinate D-ribonucleotide: step 1/1. Catalyzes the reversible adenylation of nicotinate mononucleotide (NaMN) to nicotinic acid adenine dinucleotide (NaAD). The polypeptide is Probable nicotinate-nucleotide adenylyltransferase (Listeria innocua serovar 6a (strain ATCC BAA-680 / CLIP 11262)).